A 144-amino-acid chain; its full sequence is RxLR effector protein PITG_03192 (144 aa).

The first 24 residues, 1 to 24 (MRVGFVFALLVVSVIVCFNGLTSA), serve as a signal peptide directing secretion. Positions 49-58 (RNLRASGEER) match the RxLR-dEER motif. Residue N115 is glycosylated (N-linked (GlcNAc...) asparagine). A helical transmembrane segment spans residues 122–142 (FFILATLVMFPIGVWAVVTNY).

It belongs to the RxLR effector family. In terms of assembly, interacts with the C-terminal portions the ER-associated potato NAC transcription factors NTP1 and NTP2.

The protein resides in the secreted. The protein localises to the host endoplasmic reticulum membrane. Effector that is required for full virulence. Targets host NTP1 and NTP2 transcription factors and prevents their pathogen-associated molecular pattern (PAMP)-triggered re-localization from the endoplasmic reticulum into the nucleus, where they contribute to prevent disease progression by P.infestans. This Phytophthora infestans (strain T30-4) (Potato late blight agent) protein is RxLR effector protein PITG_03192.